The primary structure comprises 435 residues: Probable exopolygalacturonase B (435 aa).

The N-terminal stretch at Met1–Ala15 is a signal peptide. 3 N-linked (GlcNAc...) asparagine glycosylation sites follow: Asn59, Asn184, and Asn224. Residue Asp254 is the Proton donor of the active site. Cys256 and Cys273 are disulfide-bonded. N-linked (GlcNAc...) asparagine glycans are attached at residues Asn262 and Asn274. Residue His277 is part of the active site. Residues Asn301, Asn328, Asn365, and Asn368 are each glycosylated (N-linked (GlcNAc...) asparagine). Cys391 and Cys397 are disulfide-bonded.

The protein belongs to the glycosyl hydrolase 28 family.

It localises to the secreted. The catalysed reaction is [(1-&gt;4)-alpha-D-galacturonosyl](n) + H2O = alpha-D-galacturonate + [(1-&gt;4)-alpha-D-galacturonosyl](n-1). Functionally, specific in hydrolyzing the terminal glycosidic bond of polygalacturonic acid and oligogalacturonates. The sequence is that of Probable exopolygalacturonase B (pgxB) from Aspergillus terreus (strain NIH 2624 / FGSC A1156).